The following is a 194-amino-acid chain: Acireductone dioxygenase 1 (194 aa).

Positions 1 to 21 are disordered; the sequence is MEAWYMDDSADDQRKPHHRSP. His87, His89, Glu93, and His132 together coordinate Fe(2+). Ni(2+) is bound by residues His87, His89, Glu93, and His132.

Belongs to the acireductone dioxygenase (ARD) family. Fe(2+) serves as cofactor. Requires Ni(2+) as cofactor.

The protein resides in the cytoplasm. Its subcellular location is the nucleus. It carries out the reaction 1,2-dihydroxy-5-(methylsulfanyl)pent-1-en-3-one + O2 = 4-methylsulfanyl-2-oxobutanoate + formate + 2 H(+). The enzyme catalyses 1,2-dihydroxy-5-(methylsulfanyl)pent-1-en-3-one + O2 = 3-(methylsulfanyl)propanoate + CO + formate + 2 H(+). The protein operates within amino-acid biosynthesis; L-methionine biosynthesis via salvage pathway; L-methionine from S-methyl-5-thio-alpha-D-ribose 1-phosphate: step 5/6. Functionally, catalyzes 2 different reactions between oxygen and the acireductone 1,2-dihydroxy-3-keto-5-methylthiopentene (DHK-MTPene) depending upon the metal bound in the active site. Fe-containing acireductone dioxygenase (Fe-ARD) produces formate and 2-keto-4-methylthiobutyrate (KMTB), the alpha-ketoacid precursor of methionine in the methionine recycle pathway. Ni-containing acireductone dioxygenase (Ni-ARD) produces methylthiopropionate, carbon monoxide and formate, and does not lie on the methionine recycle pathway. In Physcomitrium patens (Spreading-leaved earth moss), this protein is Acireductone dioxygenase 1.